Consider the following 601-residue polypeptide: Lanthanide-dependent methanol dehydrogenase (601 aa).

The N-terminal stretch at 1-21 (MRAVHLLALGAGLAAASPALA) is a signal peptide. A disulfide bridge links cysteine 124 with cysteine 125. Arginine 130, threonine 174, serine 189, glycine 190, and glycine 191 together coordinate pyrroloquinoline quinone. Glutamate 192 serves as a coordination point for La(3+). A disulfide bridge connects residues cysteine 197 and cysteine 256. Tryptophan 258 is a pyrroloquinoline quinone binding site. Positions 276, 318, and 320 each coordinate La(3+). Catalysis depends on aspartate 318, which acts as the Proton acceptor. Arginine 345 contributes to the pyrroloquinoline quinone binding site. Cysteines 408 and 437 form a disulfide. Pyrroloquinoline quinone is bound by residues tryptophan 494 and tryptophan 558.

This sequence belongs to the bacterial PQQ dehydrogenase family. As to quaternary structure, homodimer. La(3+) is required as a cofactor. Nd(3+) serves as cofactor. The cofactor is pyrroloquinoline quinone.

Its subcellular location is the periplasm. It catalyses the reaction 2 Fe(III)-[cytochrome cL] + methanol = 2 Fe(II)-[cytochrome cL] + formaldehyde + 2 H(+). Its function is as follows. Catalyzes the oxidation of methanol to formaldehyde, but only in the presence of lanthanides (Ln). Contributes to methanol metabolism when La(3+) is present in the natural environment of the bacterium, allowing bacterial growth with methanol as carbon and energy source. Thereby is an essential enzyme for Ln-dependent methylotrophy. Uses a specific cytochrome cL (XoxG), encoded by the adjacent gene in the locus, as electron acceptor. Also plays a role in the transcriptional regulation of the mxa and xox1 operons, most likely acting as a lanthanide sensory module. Is also able to oxidize formaldehyde to formate in vitro, but this activity does not occur in vivo. The polypeptide is Lanthanide-dependent methanol dehydrogenase (Methylorubrum extorquens (strain ATCC 14718 / DSM 1338 / JCM 2805 / NCIMB 9133 / AM1) (Methylobacterium extorquens)).